We begin with the raw amino-acid sequence, 273 residues long: Shikimate dehydrogenase (NADP(+)) (273 aa).

Residues 15 to 17 and Thr-62 each bind shikimate; that span reads SQS. Catalysis depends on Lys-66, which acts as the Proton acceptor. Glu-78 lines the NADP(+) pocket. 2 residues coordinate shikimate: Asn-87 and Asp-102. NADP(+) is bound by residues 127–131, 151–156, and Met-215; these read GAGGA and NRTVIK. Shikimate is bound at residue Tyr-217. Gly-239 is a binding site for NADP(+).

The protein belongs to the shikimate dehydrogenase family. As to quaternary structure, homodimer.

It catalyses the reaction shikimate + NADP(+) = 3-dehydroshikimate + NADPH + H(+). The protein operates within metabolic intermediate biosynthesis; chorismate biosynthesis; chorismate from D-erythrose 4-phosphate and phosphoenolpyruvate: step 4/7. In terms of biological role, involved in the biosynthesis of the chorismate, which leads to the biosynthesis of aromatic amino acids. Catalyzes the reversible NADPH linked reduction of 3-dehydroshikimate (DHSA) to yield shikimate (SA). The chain is Shikimate dehydrogenase (NADP(+)) from Chromobacterium violaceum (strain ATCC 12472 / DSM 30191 / JCM 1249 / CCUG 213 / NBRC 12614 / NCIMB 9131 / NCTC 9757 / MK).